Reading from the N-terminus, the 870-residue chain is Probable coatomer subunit gamma (870 aa).

HEAT repeat units follow at residues threonine 60–aspartate 97, isoleucine 99–leucine 133, glutamate 168–leucine 205, serine 278–asparagine 315, alanine 316–serine 350, and histidine 389–aspartate 425.

This sequence belongs to the COPG family. In terms of assembly, oligomeric complex that consists of at least the alpha, beta, beta', gamma, delta, epsilon and zeta subunits.

The protein resides in the cytoplasm. Its subcellular location is the golgi apparatus membrane. It is found in the cytoplasmic vesicle. It localises to the COPI-coated vesicle membrane. Its function is as follows. The coatomer is a cytosolic protein complex that binds to dilysine motifs and reversibly associates with Golgi non-clathrin-coated vesicles, which further mediate biosynthetic protein transport from the ER, via the Golgi up to the trans Golgi network. Coatomer complex is required for budding from Golgi membranes, and is essential for the retrograde Golgi-to-ER transport of dilysine-tagged proteins. In Caenorhabditis elegans, this protein is Probable coatomer subunit gamma.